The following is a 554-amino-acid chain: Urocanate hydratase (554 aa).

NAD(+) contacts are provided by residues 52-53 (GG), glutamine 130, 176-178 (GMG), glutamate 196, arginine 201, 242-243 (NA), 263-267 (QTSAH), 273-274 (YL), and tyrosine 322. The active site involves cysteine 410. Glycine 492 lines the NAD(+) pocket.

Belongs to the urocanase family. NAD(+) serves as cofactor.

The protein resides in the cytoplasm. The enzyme catalyses 4-imidazolone-5-propanoate = trans-urocanate + H2O. It participates in amino-acid degradation; L-histidine degradation into L-glutamate; N-formimidoyl-L-glutamate from L-histidine: step 2/3. Catalyzes the conversion of urocanate to 4-imidazolone-5-propionate. The chain is Urocanate hydratase from Shewanella halifaxensis (strain HAW-EB4).